Consider the following 545-residue polypeptide: CTP synthase (545 aa).

The amidoligase domain stretch occupies residues Met1–Leu265. Residue Ser15 participates in CTP binding. Position 15 (Ser15) interacts with UTP. Residues Ser16–Leu21 and Asp73 each bind ATP. 2 residues coordinate Mg(2+): Asp73 and Glu141. CTP is bound by residues Asp148 to Glu150, Lys188 to Gln193, and Lys224. Residues Lys188–Gln193 and Lys224 contribute to the UTP site. The Glutamine amidotransferase type-1 domain maps to Glu290–Ile534. Residue Gly349 participates in L-glutamine binding. Cys376 acts as the Nucleophile; for glutamine hydrolysis in catalysis. L-glutamine-binding positions include Leu377 to Gln380, Glu400, and Arg460. Active-site residues include His507 and Glu509.

It belongs to the CTP synthase family. As to quaternary structure, homotetramer.

It catalyses the reaction UTP + L-glutamine + ATP + H2O = CTP + L-glutamate + ADP + phosphate + 2 H(+). The enzyme catalyses L-glutamine + H2O = L-glutamate + NH4(+). It carries out the reaction UTP + NH4(+) + ATP = CTP + ADP + phosphate + 2 H(+). It participates in pyrimidine metabolism; CTP biosynthesis via de novo pathway; CTP from UDP: step 2/2. With respect to regulation, allosterically activated by GTP, when glutamine is the substrate; GTP has no effect on the reaction when ammonia is the substrate. The allosteric effector GTP functions by stabilizing the protein conformation that binds the tetrahedral intermediate(s) formed during glutamine hydrolysis. Inhibited by the product CTP, via allosteric rather than competitive inhibition. Its function is as follows. Catalyzes the ATP-dependent amination of UTP to CTP with either L-glutamine or ammonia as the source of nitrogen. Regulates intracellular CTP levels through interactions with the four ribonucleotide triphosphates. In Tropheryma whipplei (strain TW08/27) (Whipple's bacillus), this protein is CTP synthase.